Consider the following 223-residue polypeptide: Small ribosomal subunit protein uS3 (223 aa).

In terms of domain architecture, KH type-2 spans 39–115 (IRKYIEKNLA…RVFINIVEIK (77 aa)).

The protein belongs to the universal ribosomal protein uS3 family. As to quaternary structure, part of the 30S ribosomal subunit. Forms a tight complex with proteins S10 and S14.

Its function is as follows. Binds the lower part of the 30S subunit head. Binds mRNA in the 70S ribosome, positioning it for translation. The sequence is that of Small ribosomal subunit protein uS3 from Leuconostoc citreum (strain KM20).